We begin with the raw amino-acid sequence, 408 residues long: MDRISGLPDELLLRVLSLLPNVKDVVVTMVLSKRWQFLWMMVPKLVYDDSYQNLEYGKFSRFVDRSLFMRKAPGIETLHFKLGQNCGNGDIQWWIRAASKFCFRELIIEINCSTSASPSILPRSLYTECRMLVTLKLKKAVLVDVSSPTCFPSLKNLSLVSVKYPGNEFVKSLLSSCHVLEDLVVEQCINDNVTIFSVKVPSLKSLVLRTSKERAPDGESGFVVEAPSLEYLDIDQTGGFCVIENGMPNLAEAYVSVLHHHPVKFLSSITSVKRLYLCLLPHSILSCMQDMYPIRCVFHRLVHITLCTCDDEWLNLLACLLKGSPKLISLKLEKHHGHLICSPSPLRDDLSSVPECVLSSLETVEWVDYEGTEAERQLVEFILRNGSCLKKFVISPESVNPDKKYEMI.

The F-box domain maps to 1–54 (MDRISGLPDELLLRVLSLLPNVKDVVVTMVLSKRWQFLWMMVPKLVYDDSYQNL). Residues 345–408 (PLRDDLSSVP…VNPDKKYEMI (64 aa)) enclose the FBD domain.

The polypeptide is Putative FBD-associated F-box protein At5g50270 (Arabidopsis thaliana (Mouse-ear cress)).